Consider the following 62-residue polypeptide: Photosystem II reaction center protein Z (62 aa).

The next 2 helical transmembrane spans lie at 8 to 28 (ALFA…VAFA) and 41 to 61 (FSGA…NSFI).

This sequence belongs to the PsbZ family. In terms of assembly, PSII is composed of 1 copy each of membrane proteins PsbA, PsbB, PsbC, PsbD, PsbE, PsbF, PsbH, PsbI, PsbJ, PsbK, PsbL, PsbM, PsbT, PsbY, PsbZ, Psb30/Ycf12, at least 3 peripheral proteins of the oxygen-evolving complex and a large number of cofactors. It forms dimeric complexes.

The protein resides in the plastid. It is found in the chloroplast thylakoid membrane. Its function is as follows. May control the interaction of photosystem II (PSII) cores with the light-harvesting antenna, regulates electron flow through the 2 photosystem reaction centers. PSII is a light-driven water plastoquinone oxidoreductase, using light energy to abstract electrons from H(2)O, generating a proton gradient subsequently used for ATP formation. The sequence is that of Photosystem II reaction center protein Z from Adiantum capillus-veneris (Maidenhair fern).